Reading from the N-terminus, the 86-residue chain is U2-sicaritoxin-Li1a (86 aa).

A signal peptide spans 1-20 (MTFKLFVVVTLVLAIYVATA). Residues 21–33 (EEAMKDDSEPAER) constitute a propeptide that is removed on maturation. 4 disulfides stabilise this stretch: cysteine 35/cysteine 53, cysteine 42/cysteine 62, cysteine 52/cysteine 71, and cysteine 64/cysteine 69.

This sequence belongs to the neurotoxin 39 family. As to expression, expressed by the venom gland.

The protein resides in the secreted. In terms of biological role, toxin active against S.frugiperda larvae. May act on sodium channels (Nav). In Loxosceles intermedia (Brown spider), this protein is U2-sicaritoxin-Li1a.